The chain runs to 432 residues: Enolase 2 (432 aa).

(2R)-2-phosphoglycerate is bound at residue Q163. The Proton donor role is filled by E205. Mg(2+) contacts are provided by D242, E287, and D314. Residues K339, R368, S369, and K390 each coordinate (2R)-2-phosphoglycerate. The Proton acceptor role is filled by K339.

Belongs to the enolase family. Homodimer. Probably forms octamers. Requires Mg(2+) as cofactor.

It is found in the cytoplasm. Its subcellular location is the secreted. The protein resides in the cell surface. It catalyses the reaction (2R)-2-phosphoglycerate = phosphoenolpyruvate + H2O. It participates in carbohydrate degradation; glycolysis; pyruvate from D-glyceraldehyde 3-phosphate: step 4/5. Its function is as follows. Catalyzes the reversible conversion of 2-phosphoglycerate (2-PG) into phosphoenolpyruvate (PEP). It is essential for the degradation of carbohydrates via glycolysis. This is Enolase 2 from Lactobacillus gasseri (strain ATCC 33323 / DSM 20243 / BCRC 14619 / CIP 102991 / JCM 1131 / KCTC 3163 / NCIMB 11718 / NCTC 13722 / AM63).